The sequence spans 386 residues: Succinate--CoA ligase [ADP-forming] subunit beta (386 aa).

The ATP-grasp domain maps to 9-244 (KELLRDYGVP…LNEEDEKEIE (236 aa)). ATP is bound by residues lysine 46, 53–55 (GRG), glutamate 99, cysteine 102, and glutamate 107. Positions 199 and 213 each coordinate Mg(2+). Substrate is bound by residues asparagine 264 and 321 to 323 (GIM).

The protein belongs to the succinate/malate CoA ligase beta subunit family. As to quaternary structure, heterotetramer of two alpha and two beta subunits. Requires Mg(2+) as cofactor.

The catalysed reaction is succinate + ATP + CoA = succinyl-CoA + ADP + phosphate. It catalyses the reaction GTP + succinate + CoA = succinyl-CoA + GDP + phosphate. The protein operates within carbohydrate metabolism; tricarboxylic acid cycle; succinate from succinyl-CoA (ligase route): step 1/1. Functionally, succinyl-CoA synthetase functions in the citric acid cycle (TCA), coupling the hydrolysis of succinyl-CoA to the synthesis of either ATP or GTP and thus represents the only step of substrate-level phosphorylation in the TCA. The beta subunit provides nucleotide specificity of the enzyme and binds the substrate succinate, while the binding sites for coenzyme A and phosphate are found in the alpha subunit. This is Succinate--CoA ligase [ADP-forming] subunit beta from Alkaliphilus oremlandii (strain OhILAs) (Clostridium oremlandii (strain OhILAs)).